The following is a 699-amino-acid chain: MTAKPQKSCQFKRDYPQLINLYPPCALTTAQSLDNLTRLRLSRLTTQSTQPIQGLCVMGQWGLGDGLELLSLLQHWQTQTQTQGNTRLLVKVFEPNPINDYELKLLWDQSQSLISKSHLQPIANAILKAKPARIIGCQRLIFDDGRITVDLHFGDLHTALSQLPHSADHPIQQWLVLPHLAAQLNGKQVWQMARLSTDDAQLIGVNLAETLQQLAHKSGFSTLNVSQDALNGDASDALQSHIITDEILLHERKLLRQQADTAQAFTPKPTALATKDHPIAIVGGGLASANLMLSLAERGQSSTLFCKDNELGQGASGNRQGAIYPLLTPENDELSRFFQQAFLFSRRRIEALSHASMMETEAAPTITAISHDFCGVLQTGHDERSQQRLDKIIQSQDWPAEIAYAVDANEANEIAQIGIDKAGFFYPLGGWVCPFEYAKAAVDKASQLANVQCHFNTEITEIECDAKAWYLHSQGQRFGPFRQLVLANGAQLTQFSASERLQISPFRGQVSHVPAQFKLSQLATVLCANGYLTPSHQGLHCLGASYVKAAEHLDFCPQEQWENLGKMQESYPNQAWVDDIDISDNSARVGVRMVTRDHFPMMGCAPDVAEILARYEQHQLNQQQAEQSKHYWQTTPAPILDGLYILGGLGSRGLSSGPLAAECLAAQLTGEPLPLDWPTLNKLNPNRMWLRKLLKGKAL.

Residues 1 to 260 (MTAKPQKSCQ…ERKLLRQQAD (260 aa)) form a tRNA (mnm(5)s(2)U34)-methyltransferase region. Positions 282-699 (VGGGLASANL…LRKLLKGKAL (418 aa)) are FAD-dependent cmnm(5)s(2)U34 oxidoreductase.

The protein in the N-terminal section; belongs to the methyltransferase superfamily. tRNA (mnm(5)s(2)U34)-methyltransferase family. In the C-terminal section; belongs to the DAO family. FAD is required as a cofactor.

Its subcellular location is the cytoplasm. It carries out the reaction 5-aminomethyl-2-thiouridine(34) in tRNA + S-adenosyl-L-methionine = 5-methylaminomethyl-2-thiouridine(34) in tRNA + S-adenosyl-L-homocysteine + H(+). Functionally, catalyzes the last two steps in the biosynthesis of 5-methylaminomethyl-2-thiouridine (mnm(5)s(2)U) at the wobble position (U34) in tRNA. Catalyzes the FAD-dependent demodification of cmnm(5)s(2)U34 to nm(5)s(2)U34, followed by the transfer of a methyl group from S-adenosyl-L-methionine to nm(5)s(2)U34, to form mnm(5)s(2)U34. The sequence is that of tRNA 5-methylaminomethyl-2-thiouridine biosynthesis bifunctional protein MnmC from Shewanella sp. (strain MR-4).